The sequence spans 239 residues: UPF0173 metal-dependent hydrolase DVU_3308 (239 aa).

It belongs to the UPF0173 family.

The chain is UPF0173 metal-dependent hydrolase DVU_3308 from Nitratidesulfovibrio vulgaris (strain ATCC 29579 / DSM 644 / CCUG 34227 / NCIMB 8303 / VKM B-1760 / Hildenborough) (Desulfovibrio vulgaris).